Reading from the N-terminus, the 543-residue chain is Aluminum-activated malate transporter 14 (543 aa).

Transmembrane regions (helical) follow at residues 56-76, 80-100, 106-126, 129-149, 164-184, and 191-211; these read VGVSLTLVSLLYLMEPLFKGI, AIWAVMTVVVVLEFSAGATLC, GLGTLIAGSLAFFIEFVANDS, IFRAIFIGAAVFIIGALITYL, LIFLLTFNLITVSSYRVDTVI, and FYTIAMGVGICLLMSLLVFPI. The disordered stretch occupies residues 416-438; that stretch reads DTNEAASYQNTGTPRGERMSRFG. The span at 419-428 shows a compositional bias: polar residues; it reads EAASYQNTGT. A coiled-coil region spans residues 445-472; the sequence is RLRADTLERRSAAATNERKILRQQLSRI.

It belongs to the aromatic acid exporter (TC 2.A.85) family.

Its subcellular location is the membrane. Functionally, malate transporter. This is Aluminum-activated malate transporter 14 (ALMT14) from Arabidopsis thaliana (Mouse-ear cress).